The following is a 364-amino-acid chain: Zinc finger protein 474 (364 aa).

Residues methionine 1 to serine 10 are compositionally biased toward basic residues. Disordered regions lie at residues methionine 1–lysine 21 and serine 37–lysine 60. Residues glycine 93 to isoleucine 122 form a C2HC/C3H-type 1 zinc finger. The Zn(2+) site is built by cysteine 97, cysteine 100, histidine 112, and cysteine 116. Residues leucine 127–serine 147 form a disordered region. A compositionally biased stretch (low complexity) spans lysine 138–serine 147. 3 C2HC/C3H-type zinc fingers span residues glutamine 164–glycine 193, arginine 220–methionine 249, and glutamine 283–glycine 312. Residues cysteine 168, cysteine 171, histidine 183, cysteine 187, cysteine 224, cysteine 227, histidine 239, cysteine 243, cysteine 287, cysteine 290, histidine 302, and cysteine 306 each contribute to the Zn(2+) site. The interval cysteine 187–glycine 214 is disordered.

The cofactor is Zn(2+).

The chain is Zinc finger protein 474 (ZNF474) from Homo sapiens (Human).